We begin with the raw amino-acid sequence, 798 residues long: Palmitoyl thioesterase CPT1C (798 aa).

The Cytoplasmic segment spans residues 1-52 (MAEAHQASSLLSSLSSDGAEVELSSPVWQEIYLCALRSWKRHLWRVWNDFLA). Residues 53 to 75 (GVVPATPLSWLFLFSTIQLACLL) traverse the membrane as a helical segment. Residues 76–103 (QLDPSLGLMEKIKELLPDWGGQHHQLQG) lie on the Lumenal side of the membrane. The helical transmembrane segment at 104 to 126 (FLSAAVFASCLWGALIFTLHVAL) threads the bilayer. Residues 127–798 (RLLLSHHGWL…PNTPTSSTNL (672 aa)) are Cytoplasmic-facing. Catalysis depends on histidine 469, which acts as the Proton acceptor. 551–563 (GKSFIKCCHVSSD) provides a ligand contact to CoA. (R)-carnitine is bound by residues tyrosine 585, serine 587, and threonine 598. The interval 759 to 798 (LFRVGQHFKRQFRGENSDYRYNFLSCKTVDPNTPTSSTNL) is required for interaction with GRIA1.

Belongs to the carnitine/choline acetyltransferase family. As to quaternary structure, peripherally associated with AMPAR complex. AMPAR complex consists of an inner core made of 4 pore-forming GluA/GRIA proteins (GRIA1, GRIA2, GRIA3 and GRIA4) and 4 major auxiliary subunits arranged in a twofold symmetry. One of the two pairs of distinct binding sites is occupied either by CNIH2, CNIH3 or CACNG2, CACNG3. The other harbors CACNG2, CACNG3, CACNG4, CACNG8 or GSG1L. This inner core of AMPAR complex is complemented by outer core constituents binding directly to the GluA/GRIA proteins at sites distinct from the interaction sites of the inner core constituents. Outer core constituents include at least PRRT1, PRRT2, CKAMP44/SHISA9, FRRS1L and NRN1. The proteins of the inner and outer core serve as a platform for other, more peripherally associated AMPAR constituents, including CPT1C. Alone or in combination, these auxiliary subunits control the gating and pharmacology of the AMPAR complex and profoundly impact their biogenesis and protein processing. Interacts with SACM1L; the interaction regulates SACM1L phosphatidylinositol-3-phosphatase activity and translocation to endoplasmic reticulum/trans Golgi network in a malonyl-CoA dependent manner. Interacts with ATL1. Predominantly expressed in brain (at protein level) and testis, highly expressed in the hippocampus, amygdala and cerebellum. Expressed in neurons but not astrocytes. Expressed in the ventral horn from spinal cords.

It is found in the synapse. The protein localises to the cell projection. It localises to the axon. The protein resides in the dendrite. Its subcellular location is the dendritic spine. It is found in the endoplasmic reticulum membrane. It catalyses the reaction S-hexadecanoyl-L-cysteinyl-[protein] + H2O = L-cysteinyl-[protein] + hexadecanoate + H(+). In terms of biological role, palmitoyl thioesterase specifically expressed in the endoplasmic reticulum of neurons. Modulates the trafficking of the glutamate receptor, AMPAR, to plasma membrane through depalmitoylation of GRIA1. Also regulates AMPR trafficking through the regulation of SACM1L phosphatidylinositol-3-phosphatase activity by interaction in a malonyl-CoA dependent manner. Binds malonyl-CoA and couples malonyl-CoA to ceramide levels, necessary for proper spine maturation and contributing to systemic energy homeostasis and appetite control. Binds to palmitoyl-CoA, but does not have carnitine palmitoyltransferase 1 catalytic activity or at very low levels. This chain is Palmitoyl thioesterase CPT1C (Cpt1c), found in Mus musculus (Mouse).